A 1727-amino-acid polypeptide reads, in one-letter code: Gag-Pol polyprotein (1727 aa).

Gly2 carries N-myristoyl glycine; by host lipidation. The short motif at 109-112 (STLL) is the PTAP/PSAP motif element. The LYPX(n)L motif signature appears at 128–132 (VLPDE). Disordered stretches follow at residues 137–221 (LLFQ…PSTW), 302–322 (KNVPGPGGLPTQLPNEIDEGF), 443–471 (KRETPEEREARLIKEQEEREDRRDRKRDK), and 515–547 (DCPKRPRDQKKPAPVLTLGEDSEQGCQGSGAPP). Residues 143 to 165 (LPHPPHNPLLEPPPYNSPSPPVL) are compositionally biased toward pro residues. A PPXY motif motif is present at residues 154–157 (PPPY). Over residues 166–187 (SPVSPTTPSAPTPSSLVSSSTP) the composition is skewed to low complexity. A compositionally biased stretch (pro residues) spans 188 to 204 (PSSPAPPELTPRTPPQT). 2 stretches are compositionally biased toward basic and acidic residues: residues 443–465 (KRETPEEREARLIKEQEEREDRR) and 515–525 (DCPKRPRDQKK). The CCHC-type zinc finger occupies 501 to 518 (DQCAYCKERGHWIKDCPK). Residues 560 to 630 (TTFLVDTGAQ…CPYPLLGRDL (71 aa)) enclose the Peptidase A2 domain. Asp565 acts as the Protease; shared with dimeric partner in catalysis. The Reverse transcriptase domain maps to 736 to 929 (KFLELGVLRP…TKVTYLGYIL (194 aa)). Mg(2+) contacts are provided by Asp806, Asp880, Asp881, Asp1181, Glu1219, Asp1240, and Asp1310. Residues 1172 to 1318 (PDADHTWYTD…ADRVARQAAM (147 aa)) enclose the RNase H type-1 domain. The segment at 1383–1421 (HAWTHLGNRKLKLLIEKTDFLIPRASTLIEQVTSACKVC) adopts an HHCC-type zinc-finger fold. Residues 1438-1596 (RGNRPGVYWE…TPYEILYGGP (159 aa)) form the Integrase catalytic domain. 2 residues coordinate Mg(2+): Asp1449 and Asp1508.

This sequence belongs to the retroviral Pol polyprotein family. As to quaternary structure, homohexamer; further associates as homomultimer. The virus core is composed of a lattice formed from hexagonal rings, each containing six capsid monomers. Interacts (via PPXY motif) with host NEDD4. Interacts (via PSAP motif) with host TSG101. Interacts (via LYPX(n)L motif) with host PDCD6IP. In terms of assembly, the reverse transcriptase is a monomer (Potential). Interacts (via RNase domains) with host release factor ETF1; this interaction is essential for translational readthrough of amber codon between viral gag and pol genes, as well as for viral replication. As to quaternary structure, homodimer. Requires Mg(2+) as cofactor. Specific enzymatic cleavages by the viral protease yield mature proteins. The protease is released by autocatalytic cleavage. The polyprotein is cleaved during and after budding, this process is termed maturation. Post-translationally, phosphorylated on serine residues.

It is found in the virion. The protein resides in the host cell membrane. The protein localises to the host late endosome membrane. It localises to the host endosome. Its subcellular location is the host multivesicular body. It is found in the host cytoplasm. It carries out the reaction DNA(n) + a 2'-deoxyribonucleoside 5'-triphosphate = DNA(n+1) + diphosphate. It catalyses the reaction Endonucleolytic cleavage to 5'-phosphomonoester.. Most efficiently inhibited by Amprenavir, which is able to block Gag-Pol processing in infected cells. Plays a role in budding and is processed by the viral protease during virion maturation outside the cell. During budding, it recruits, in a PPXY-dependent or independent manner, Nedd4-like ubiquitin ligases that conjugate ubiquitin molecules to Gag-Pol, or to Gag-Pol binding host factors. Interaction with HECT ubiquitin ligases probably links the viral protein to the host ESCRT pathway and facilitates release. Its function is as follows. Targets Gag and gag-pol polyproteins to the plasma membrane via a multipartite membrane binding signal, that includes its myristoylated N-terminus. Also mediates nuclear localization of the pre-integration complex. Functionally, constituent of the pre-integration complex (PIC) which tethers the latter to mitotic chromosomes. This allows the integration of the viral genome into the host DNA. In terms of biological role, forms the spherical core of the virion that encapsulates the genomic RNA-nucleocapsid complex. Involved in the packaging and encapsidation of two copies of the genome. Binds with high affinity to conserved UCUG elements within the packaging signal, located near the 5'-end of the genome. This binding is dependent on genome dimerization. Acts as a nucleic acid chaperone which is involved in rearrangement of nucleic acid secondary structures during gRNA retrotranscription. Its function is as follows. The aspartyl protease mediates proteolytic cleavages of Gag and Gag-Pol polyproteins during or shortly after the release of the virion from the plasma membrane. Cleavages take place as an ordered, step-wise cascade to yield mature proteins. This process is called maturation. Displays maximal activity during the budding process just prior to particle release from the cell. Functionally, RT is a multifunctional enzyme that converts the viral dimeric RNA genome into dsDNA in the cytoplasm, shortly after virus entry into the cell. This enzyme displays a DNA polymerase activity that can copy either DNA or RNA templates, and a ribonuclease H (RNase H) activity that cleaves the RNA strand of RNA-DNA heteroduplexes in a partially processive 3' to 5' endonucleasic mode. Conversion of viral genomic RNA into dsDNA requires many steps. A tRNA binds to the primer-binding site (PBS) situated at the 5' end of the viral RNA. RT uses the 3' end of the tRNA primer to perform a short round of RNA-dependent minus-strand DNA synthesis. The reading proceeds through the U5 region and ends after the repeated (R) region which is present at both ends of viral RNA. The portion of the RNA-DNA heteroduplex is digested by the RNase H, resulting in a ssDNA product attached to the tRNA primer. This ssDNA/tRNA hybridizes with the identical R region situated at the 3' end of viral RNA. This template exchange, known as minus-strand DNA strong stop transfer, can be either intra- or intermolecular. RT uses the 3' end of this newly synthesized short ssDNA to perform the RNA-dependent minus-strand DNA synthesis of the whole template. RNase H digests the RNA template except for a polypurine tract (PPT) situated at the 5' end of the genome. It is not clear if both polymerase and RNase H activities are simultaneous. RNase H probably can proceed both in a polymerase-dependent (RNA cut into small fragments by the same RT performing DNA synthesis) and a polymerase-independent mode (cleavage of remaining RNA fragments by free RTs). Secondly, RT performs DNA-directed plus-strand DNA synthesis using the PPT that has not been removed by RNase H as primers. PPT and tRNA primers are then removed by RNase H. The 3' and 5' ssDNA PBS regions hybridize to form a circular dsDNA intermediate. Strand displacement synthesis by RT to the PBS and PPT ends produces a blunt ended, linear dsDNA copy of the viral genome that includes long terminal repeats (LTRs) at both ends. In terms of biological role, catalyzes viral DNA integration into the host chromosome, by performing a series of DNA cutting and joining reactions. This enzyme activity takes place after virion entry into a cell and reverse transcription of the RNA genome in dsDNA. The first step in the integration process is 3' processing. This step requires a complex comprising the viral genome, matrix protein and integrase. This complex is called the pre-integration complex (PIC). The integrase protein removes 2 nucleotides from each 3' end of the viral DNA, leaving recessed CA OH's at the 3' ends. In the second step that requires cell division, the PIC enters cell nucleus. In the third step, termed strand transfer, the integrase protein joins the previously processed 3' ends to the 5' ends of strands of target cellular DNA at the site of integration. The last step is viral DNA integration into host chromosome. The protein is Gag-Pol polyprotein (pol) of Papio (baboons).